The primary structure comprises 297 residues: Phosphoribosylaminoimidazole-succinocarboxamide synthase (297 aa).

This sequence belongs to the SAICAR synthetase family.

It catalyses the reaction 5-amino-1-(5-phospho-D-ribosyl)imidazole-4-carboxylate + L-aspartate + ATP = (2S)-2-[5-amino-1-(5-phospho-beta-D-ribosyl)imidazole-4-carboxamido]succinate + ADP + phosphate + 2 H(+). Its pathway is purine metabolism; IMP biosynthesis via de novo pathway; 5-amino-1-(5-phospho-D-ribosyl)imidazole-4-carboxamide from 5-amino-1-(5-phospho-D-ribosyl)imidazole-4-carboxylate: step 1/2. This is Phosphoribosylaminoimidazole-succinocarboxamide synthase from Mycobacterium sp. (strain KMS).